We begin with the raw amino-acid sequence, 99 residues long: Large ribosomal subunit protein uL23 (99 aa).

This sequence belongs to the universal ribosomal protein uL23 family. Part of the 50S ribosomal subunit. Contacts protein L29, and trigger factor when it is bound to the ribosome.

Functionally, one of the early assembly proteins it binds 23S rRNA. One of the proteins that surrounds the polypeptide exit tunnel on the outside of the ribosome. Forms the main docking site for trigger factor binding to the ribosome. The chain is Large ribosomal subunit protein uL23 from Lachnospira eligens (strain ATCC 27750 / DSM 3376 / VPI C15-48 / C15-B4) (Eubacterium eligens).